The sequence spans 156 residues: Small ribosomal subunit protein uS7 (156 aa).

The protein belongs to the universal ribosomal protein uS7 family. In terms of assembly, part of the 30S ribosomal subunit. Contacts proteins S9 and S11.

Its function is as follows. One of the primary rRNA binding proteins, it binds directly to 16S rRNA where it nucleates assembly of the head domain of the 30S subunit. Is located at the subunit interface close to the decoding center, probably blocks exit of the E-site tRNA. This is Small ribosomal subunit protein uS7 from Deinococcus geothermalis (strain DSM 11300 / CIP 105573 / AG-3a).